The chain runs to 353 residues: uncharacterized protein (353 aa).

Residues 267-287 (GLPLVVIEAMAFGLPIVAFNC) traverse the membrane as a helical segment.

Belongs to the glycosyltransferase group 1 family. Glycosyltransferase 4 subfamily.

The protein resides in the membrane. This is an uncharacterized protein from Haemophilus influenzae (strain ATCC 51907 / DSM 11121 / KW20 / Rd).